Here is a 134-residue protein sequence, read N- to C-terminus: Profilin-3 (134 aa).

An intrachain disulfide couples Cys-13 to Cys-118. The Involved in PIP2 interaction motif lies at 84–100 (AVIRGKKGSGGITIKKT). At Thr-114 the chain carries Phosphothreonine.

This sequence belongs to the profilin family. Occurs in many kinds of cells as a complex with monomeric actin in a 1:1 ratio. Phosphorylated by MAP kinases.

It is found in the cytoplasm. The protein resides in the cytoskeleton. Functionally, binds to actin and affects the structure of the cytoskeleton. At high concentrations, profilin prevents the polymerization of actin, whereas it enhances it at low concentrations. This chain is Profilin-3, found in Olea europaea (Common olive).